We begin with the raw amino-acid sequence, 255 residues long: 5-oxoprolinase subunit A (255 aa).

Belongs to the LamB/PxpA family. As to quaternary structure, forms a complex composed of PxpA, PxpB and PxpC.

The enzyme catalyses 5-oxo-L-proline + ATP + 2 H2O = L-glutamate + ADP + phosphate + H(+). Its function is as follows. Catalyzes the cleavage of 5-oxoproline to form L-glutamate coupled to the hydrolysis of ATP to ADP and inorganic phosphate. The polypeptide is 5-oxoprolinase subunit A (Clostridium kluyveri (strain ATCC 8527 / DSM 555 / NBRC 12016 / NCIMB 10680 / K1)).